The sequence spans 118 residues: Small ribosomal subunit protein uS13 (118 aa).

The tract at residues 91-118 is disordered; it reads HRRSLPVRGQRTKTNARTRKGPRKPIRK.

The protein belongs to the universal ribosomal protein uS13 family. Part of the 30S ribosomal subunit. Forms a loose heterodimer with protein S19. Forms two bridges to the 50S subunit in the 70S ribosome.

Its function is as follows. Located at the top of the head of the 30S subunit, it contacts several helices of the 16S rRNA. In the 70S ribosome it contacts the 23S rRNA (bridge B1a) and protein L5 of the 50S subunit (bridge B1b), connecting the 2 subunits; these bridges are implicated in subunit movement. Contacts the tRNAs in the A and P-sites. The polypeptide is Small ribosomal subunit protein uS13 (Marinomonas sp. (strain MWYL1)).